The primary structure comprises 98 residues: NADH-ubiquinone oxidoreductase chain 4L (98 aa).

3 helical membrane-spanning segments follow: residues 2-22 (PSIS…MLMF), 29-49 (SLLC…LIIL), and 61-81 (ILLL…LVMI).

This sequence belongs to the complex I subunit 4L family. In terms of assembly, core subunit of respiratory chain NADH dehydrogenase (Complex I) which is composed of 45 different subunits.

It localises to the mitochondrion inner membrane. The enzyme catalyses a ubiquinone + NADH + 5 H(+)(in) = a ubiquinol + NAD(+) + 4 H(+)(out). Functionally, core subunit of the mitochondrial membrane respiratory chain NADH dehydrogenase (Complex I) which catalyzes electron transfer from NADH through the respiratory chain, using ubiquinone as an electron acceptor. Part of the enzyme membrane arm which is embedded in the lipid bilayer and involved in proton translocation. This chain is NADH-ubiquinone oxidoreductase chain 4L (MT-ND4L), found in Mirza coquereli (Coquerel's giant mouse lemur).